Reading from the N-terminus, the 523-residue chain is MAPPRPEETISEDLDESSGSSETEQPDIQTRAPKRRRLSASSDDSYVAPAPLPTLSRIKKKGAEDAKPVASAGQENPVLIRDALEIGLREEASSFSALNVAPWLVGSLTTLAVRKPTAIQKACIPEILNGKDCIGGSRTGSGKTIAFSVPMLQKWAEDPLGIFGLILTPTRELALQIFEQIKAISAPQSMKPVLITGGTDMRSQALALAGRPHVVVATPGRLADHIKSSGEDTVCGLKRVRMVVLDEADRLLSSGPGSMLPDVETCLSALPPSSERQTLLFTATVTPEVRALKNMPRAANKPPVFVTEISSESQGTVPPTLKQTYLKVPLTHREAFLHVLLSTEGNSTKPAIIFCNHTKTADLLERMLRRLSHRVTSLHSLLPQSERNANLARFRASAARILVATDVASRGLDIPSVSLVVNYDVPRNPDDYVHRVGRTARAGRSGESVTLVGQRDVQLVLAIEARVGRQMEEWSEEGVSIEGRVVRTGVLKEVGEAKREASGEIDEGRDVLGRKRNKLKKVR.

The interval 1 to 52 is disordered; sequence MAPPRPEETISEDLDESSGSSETEQPDIQTRAPKRRRLSASSDDSYVAPAPL. Positions 93–121 match the Q motif motif; the sequence is SSFSALNVAPWLVGSLTTLAVRKPTAIQK. The 180-residue stretch at 124 to 303 folds into the Helicase ATP-binding domain; it reads IPEILNGKDC…NMPRAANKPP (180 aa). 137 to 144 is a binding site for ATP; it reads SRTGSGKT. The short motif at 246–249 is the DEAD box element; sequence DEAD. The region spanning 335 to 492 is the Helicase C-terminal domain; that stretch reads AFLHVLLSTE…GRVVRTGVLK (158 aa).

The protein belongs to the DEAD box helicase family. DDX49/DBP8 subfamily.

The protein localises to the nucleus. Its subcellular location is the nucleolus. It catalyses the reaction ATP + H2O = ADP + phosphate + H(+). ATP-binding RNA helicase involved in 40S ribosomal subunit biogenesis and is required for the normal formation of 18S rRNAs through pre-rRNA processing at A0, A1 and A2 sites. Required for vegetative growth. The protein is ATP-dependent RNA helicase dbp8 (dbp8) of Aspergillus clavatus (strain ATCC 1007 / CBS 513.65 / DSM 816 / NCTC 3887 / NRRL 1 / QM 1276 / 107).